The sequence spans 227 residues: Cytochrome c oxidase subunit 2 (227 aa).

At 1–14 (MPYPLQLGFQDATS) the chain is on the mitochondrial intermembrane side. Residues 15–45 (PIMEELLHFHDHTLMIVFLISSLVLYIITLM) form a helical membrane-spanning segment. Residues 46–59 (LTTKLTHTSTMDAQ) lie on the Mitochondrial matrix side of the membrane. The helical transmembrane segment at 60–87 (EVETVWTILPAVILILIALPSLRILYMM) threads the bilayer. Over 88 to 227 (DEINNPLLTI…HFEDWSTSML (140 aa)) the chain is Mitochondrial intermembrane. H161, C196, E198, C200, H204, and M207 together coordinate Cu cation. Position 198 (E198) interacts with Mg(2+).

The protein belongs to the cytochrome c oxidase subunit 2 family. Component of the cytochrome c oxidase (complex IV, CIV), a multisubunit enzyme composed of 14 subunits. The complex is composed of a catalytic core of 3 subunits MT-CO1, MT-CO2 and MT-CO3, encoded in the mitochondrial DNA, and 11 supernumerary subunits COX4I, COX5A, COX5B, COX6A, COX6B, COX6C, COX7A, COX7B, COX7C, COX8 and NDUFA4, which are encoded in the nuclear genome. The complex exists as a monomer or a dimer and forms supercomplexes (SCs) in the inner mitochondrial membrane with NADH-ubiquinone oxidoreductase (complex I, CI) and ubiquinol-cytochrome c oxidoreductase (cytochrome b-c1 complex, complex III, CIII), resulting in different assemblies (supercomplex SCI(1)III(2)IV(1) and megacomplex MCI(2)III(2)IV(2)). Found in a complex with TMEM177, COA6, COX18, COX20, SCO1 and SCO2. Interacts with TMEM177 in a COX20-dependent manner. Interacts with COX20. Interacts with COX16. Cu cation is required as a cofactor.

Its subcellular location is the mitochondrion inner membrane. The enzyme catalyses 4 Fe(II)-[cytochrome c] + O2 + 8 H(+)(in) = 4 Fe(III)-[cytochrome c] + 2 H2O + 4 H(+)(out). Functionally, component of the cytochrome c oxidase, the last enzyme in the mitochondrial electron transport chain which drives oxidative phosphorylation. The respiratory chain contains 3 multisubunit complexes succinate dehydrogenase (complex II, CII), ubiquinol-cytochrome c oxidoreductase (cytochrome b-c1 complex, complex III, CIII) and cytochrome c oxidase (complex IV, CIV), that cooperate to transfer electrons derived from NADH and succinate to molecular oxygen, creating an electrochemical gradient over the inner membrane that drives transmembrane transport and the ATP synthase. Cytochrome c oxidase is the component of the respiratory chain that catalyzes the reduction of oxygen to water. Electrons originating from reduced cytochrome c in the intermembrane space (IMS) are transferred via the dinuclear copper A center (CU(A)) of subunit 2 and heme A of subunit 1 to the active site in subunit 1, a binuclear center (BNC) formed by heme A3 and copper B (CU(B)). The BNC reduces molecular oxygen to 2 water molecules using 4 electrons from cytochrome c in the IMS and 4 protons from the mitochondrial matrix. In Dasypus novemcinctus (Nine-banded armadillo), this protein is Cytochrome c oxidase subunit 2 (MT-CO2).